The primary structure comprises 184 residues: Holliday junction branch migration complex subunit RuvA (184 aa).

The tract at residues 1-61 (MIAALRGNIF…ENEYTLYGFA (61 aa)) is domain I. The domain II stretch occupies residues 62-135 (DKNEKKLFDS…GEFEVVFEEQ (74 aa)). A region of interest (flexible linker) is located at residue Gln135. Residues 135–184 (QNPVFNQALSALESLGFNKNDIVKALNGIKSDNLEETIKLALKKLSKDIK) are domain III.

It belongs to the RuvA family. In terms of assembly, homotetramer. Forms an RuvA(8)-RuvB(12)-Holliday junction (HJ) complex. HJ DNA is sandwiched between 2 RuvA tetramers; dsDNA enters through RuvA and exits via RuvB. An RuvB hexamer assembles on each DNA strand where it exits the tetramer. Each RuvB hexamer is contacted by two RuvA subunits (via domain III) on 2 adjacent RuvB subunits; this complex drives branch migration. In the full resolvosome a probable DNA-RuvA(4)-RuvB(12)-RuvC(2) complex forms which resolves the HJ.

The protein resides in the cytoplasm. Its function is as follows. The RuvA-RuvB-RuvC complex processes Holliday junction (HJ) DNA during genetic recombination and DNA repair, while the RuvA-RuvB complex plays an important role in the rescue of blocked DNA replication forks via replication fork reversal (RFR). RuvA specifically binds to HJ cruciform DNA, conferring on it an open structure. The RuvB hexamer acts as an ATP-dependent pump, pulling dsDNA into and through the RuvAB complex. HJ branch migration allows RuvC to scan DNA until it finds its consensus sequence, where it cleaves and resolves the cruciform DNA. This is Holliday junction branch migration complex subunit RuvA from Nautilia profundicola (strain ATCC BAA-1463 / DSM 18972 / AmH).